The chain runs to 472 residues: Protein c-ets-2-A (472 aa).

In terms of domain architecture, PNT spans 85-170; that stretch reads NTFNGFAKKR…EHLEEMMKEH (86 aa). Residues 366-446 constitute a DNA-binding region (ETS); it reads IQLWQFLLEL…SGKRYVYRFV (81 aa).

Belongs to the ETS family.

The protein resides in the nucleus. Functionally, probable transcription factor. In Xenopus laevis (African clawed frog), this protein is Protein c-ets-2-A (ets2-a).